The chain runs to 115 residues: UPF0102 protein NGO_1987 (115 aa).

Belongs to the UPF0102 family.

The protein is UPF0102 protein NGO_1987 of Neisseria gonorrhoeae (strain ATCC 700825 / FA 1090).